Here is a 209-residue protein sequence, read N- to C-terminus: tRNA (guanine-N(7)-)-methyltransferase (209 aa).

The S-adenosyl-L-methionine site is built by Glu-40, Glu-65, and Asp-114. Residue Asp-114 is part of the active site. Substrate contacts are provided by residues Asp-150 and 188–191; that span reads TAFE.

It belongs to the class I-like SAM-binding methyltransferase superfamily. TrmB family.

The catalysed reaction is guanosine(46) in tRNA + S-adenosyl-L-methionine = N(7)-methylguanosine(46) in tRNA + S-adenosyl-L-homocysteine. The protein operates within tRNA modification; N(7)-methylguanine-tRNA biosynthesis. Functionally, catalyzes the formation of N(7)-methylguanine at position 46 (m7G46) in tRNA. The sequence is that of tRNA (guanine-N(7)-)-methyltransferase from Bdellovibrio bacteriovorus (strain ATCC 15356 / DSM 50701 / NCIMB 9529 / HD100).